The following is a 101-amino-acid chain: NADH-quinone oxidoreductase subunit K (101 aa).

3 helical membrane passes run 4 to 24, 30 to 50, and 61 to 81; these read LAHY…GIFL, IIIL…FVAF, and IFVF…LAIL.

This sequence belongs to the complex I subunit 4L family. NDH-1 is composed of 14 different subunits. Subunits NuoA, H, J, K, L, M, N constitute the membrane sector of the complex.

The protein localises to the cell inner membrane. The enzyme catalyses a quinone + NADH + 5 H(+)(in) = a quinol + NAD(+) + 4 H(+)(out). NDH-1 shuttles electrons from NADH, via FMN and iron-sulfur (Fe-S) centers, to quinones in the respiratory chain. The immediate electron acceptor for the enzyme in this species is believed to be ubiquinone. Couples the redox reaction to proton translocation (for every two electrons transferred, four hydrogen ions are translocated across the cytoplasmic membrane), and thus conserves the redox energy in a proton gradient. This chain is NADH-quinone oxidoreductase subunit K, found in Paraburkholderia xenovorans (strain LB400).